The sequence spans 334 residues: MTIIVTGAAGFIGSNIVKALNQRGITDIVAVDNLSKGEKFKNLAECEIAHYLDKHEFIRQVREHILPYQNIEAVFHQGACSDTMNYDGLYMMDNNYQYTLDLLDWCQDERIPFLYASSAAVYGKGEIFREERELEKPLNVYGYSKFLFDQVLRRRMKEGLTAQVVGFRYFNVYGQHEQHKGRMASVAFHHFHQYREHGYVNLFGSNDGYGNGEQTRDFVSVEDVAKVNLYFFDHPELSGIYNLGTGRSQQFNELAAATVNACRAAEGKPEMSLKELVEEELIRYIPFPNALKGKYQSFTQADITKLREAGYKEEFFDVKAGIDRYVKWMLENLA.

Residues 11–12 (FI), 32–33 (DN), K39, K54, 77–81 (QGACS), and N94 each bind NADP(+). Residue Y141 is the Proton acceptor of the active site. K145 lines the NADP(+) pocket. Residue N171 participates in substrate binding. V172 and K180 together coordinate NADP(+). K180 (proton acceptor) is an active-site residue. Residues R182, H189, 203 to 206 (FGSN), R216, and Y295 each bind substrate.

The protein belongs to the NAD(P)-dependent epimerase/dehydratase family. HldD subfamily. Homopentamer. The cofactor is NADP(+).

It carries out the reaction ADP-D-glycero-beta-D-manno-heptose = ADP-L-glycero-beta-D-manno-heptose. Its pathway is nucleotide-sugar biosynthesis; ADP-L-glycero-beta-D-manno-heptose biosynthesis; ADP-L-glycero-beta-D-manno-heptose from D-glycero-beta-D-manno-heptose 7-phosphate: step 4/4. It participates in bacterial outer membrane biogenesis; LOS core biosynthesis. Its function is as follows. Catalyzes the interconversion between ADP-D-glycero-beta-D-manno-heptose and ADP-L-glycero-beta-D-manno-heptose via an epimerization at carbon 6 of the heptose. This is ADP-L-glycero-D-manno-heptose-6-epimerase from Neisseria meningitidis serogroup A / serotype 4A (strain DSM 15465 / Z2491).